The primary structure comprises 263 residues: ESGMGKTHLLKAAKNYIESNFFDLKVSYMSGDEFARKAVDILQKTHKEIEQFKNEVCQNDVLIIDDVQFLSYKEKTNEIFFTIFNNFIENDKQLFFSSDKSPELLNGFDNRLITRFNMGLSIAIQKLDNKTATAIIKKEIKNQNIKSEVTSEAINFISNYYSDDVRKIKGSVSRLNFWSQQNPEEKIITIEIISDLFRDIPTSKLGILNVKKIKEVVSEKYGISVNAIDGKARSKSIVTARHIAMFLTKEILNHTLAQIGEEF.

Position 1 (glutamate 1) is a region of interest, domain I, interacts with DnaA modulators. Glutamate 1 is a region of interest (domain II). The tract at residues 1-179 is domain III, AAA+ region; the sequence is ESGMGKTHLL…GSVSRLNFWS (179 aa). ATP-binding residues include glycine 3, glycine 5, lysine 6, and threonine 7. The domain IV, binds dsDNA stretch occupies residues 180–263; sequence QQNPEEKIIT…HTLAQIGEEF (84 aa).

It belongs to the DnaA family. As to quaternary structure, oligomerizes as a right-handed, spiral filament on DNA at oriC.

It localises to the cytoplasm. In terms of biological role, plays an essential role in the initiation and regulation of chromosomal replication. ATP-DnaA binds to the origin of replication (oriC) to initiate formation of the DNA replication initiation complex once per cell cycle. Binds the DnaA box (a 9 base pair repeat at the origin) and separates the double-stranded (ds)DNA. Forms a right-handed helical filament on oriC DNA; dsDNA binds to the exterior of the filament while single-stranded (ss)DNA is stabiized in the filament's interior. The ATP-DnaA-oriC complex binds and stabilizes one strand of the AT-rich DNA unwinding element (DUE), permitting loading of DNA polymerase. After initiation quickly degrades to an ADP-DnaA complex that is not apt for DNA replication. Binds acidic phospholipids. The sequence is that of Chromosomal replication initiator protein DnaA from Mycoplasma mycoides.